Here is a 270-residue protein sequence, read N- to C-terminus: ATP synthase subunit a (270 aa).

Transmembrane regions (helical) follow at residues 29 to 49 (VDTF…FAMV), 87 to 107 (IAPL…MDLF), 108 to 128 (PVDL…GLEP), 140 to 160 (DVNA…GFSI), 182 to 202 (PVGA…ELAA), 220 to 240 (LIFI…GAPW), and 241 to 261 (AIFH…LTIV).

Belongs to the ATPase A chain family. In terms of assembly, F-type ATPases have 2 components, CF(1) - the catalytic core - and CF(0) - the membrane proton channel. CF(1) has five subunits: alpha(3), beta(3), gamma(1), delta(1), epsilon(1). CF(0) has three main subunits: a(1), b(2) and c(9-12). The alpha and beta chains form an alternating ring which encloses part of the gamma chain. CF(1) is attached to CF(0) by a central stalk formed by the gamma and epsilon chains, while a peripheral stalk is formed by the delta and b chains.

Its subcellular location is the cell inner membrane. Its function is as follows. Key component of the proton channel; it plays a direct role in the translocation of protons across the membrane. This Chromobacterium violaceum (strain ATCC 12472 / DSM 30191 / JCM 1249 / CCUG 213 / NBRC 12614 / NCIMB 9131 / NCTC 9757 / MK) protein is ATP synthase subunit a.